Reading from the N-terminus, the 420-residue chain is UDP-N-acetyl-D-mannosamine dehydrogenase (420 aa).

NAD(+) contacts are provided by Y13, I14, D33, T85, and T126. UDP-N-acetyl-alpha-D-mannosaminouronate is bound by residues R160, V161, K212, N216, R219, H250, R252, and G263. K212 functions as the Proton donor/acceptor in the catalytic mechanism. The active-site Nucleophile is the C266. The UDP-N-acetyl-alpha-D-mannosaminouronate site is built by F330 and K331. R338 contacts NAD(+). K416 contributes to the UDP-N-acetyl-alpha-D-mannosaminouronate binding site.

The protein belongs to the UDP-glucose/GDP-mannose dehydrogenase family. WecC subfamily. As to quaternary structure, homodimer.

The catalysed reaction is UDP-N-acetyl-alpha-D-mannosamine + 2 NAD(+) + H2O = UDP-N-acetyl-alpha-D-mannosaminouronate + 2 NADH + 3 H(+). Its pathway is bacterial outer membrane biogenesis; enterobacterial common antigen biosynthesis. Its function is as follows. Catalyzes the four-electron oxidation of UDP-N-acetyl-D-mannosamine (UDP-ManNAc), reducing NAD(+) and releasing UDP-N-acetylmannosaminuronic acid (UDP-ManNAcA). The protein is UDP-N-acetyl-D-mannosamine dehydrogenase of Salmonella typhimurium (strain LT2 / SGSC1412 / ATCC 700720).